The sequence spans 336 residues: Atypical chemokine receptor 1 (336 aa).

Topologically, residues 1 to 63 (MGNCLHQAEL…CSLLNDSSLP (63 aa)) are extracellular. N16, N27, N33, and N58 each carry an N-linked (GlcNAc...) asparagine glycan. Disulfide bonds link C51–C276 and C129–C195. Residues 64-84 (FFILASDLGILASSTVLFMLF) form a helical membrane-spanning segment. Residues 85–95 (RPLFRWQLCPG) are Cytoplasmic-facing. The helical transmembrane segment at 96 to 116 (WPVLAQLAVGSALFSIVVPIL) threads the bilayer. Over 117-129 (APGLGNTHSSALC) the chain is Extracellular. Residues 130–153 (SLGYCVWYGSAFAQALLLGCHASL) form a helical membrane-spanning segment. Residues 154-166 (GPKLGAGQVPGLT) are Cytoplasmic-facing. A helical transmembrane segment spans residues 167–187 (LGLPVGLWGATALLTLPITLA). At 188–207 (SGASDGLCTPIYSTELEALQ) the chain is on the extracellular side. Residues 208–228 (ATHAVACFAIFVLLPLGLFGA) form a helical membrane-spanning segment. The Cytoplasmic portion of the chain corresponds to 229 to 244 (KGLKKALGMGPGPWMN). The helical transmembrane segment at 245-265 (ILWVWFIFWWPHGLVLGLDFL) threads the bilayer. The Extracellular portion of the chain corresponds to 266-287 (VGSKLSLLPTCLAQQVLDLLLN). Residues 288 to 308 (LAEALAIVHCVATPLLLALFC) form a helical membrane-spanning segment. Over 309 to 336 (HQTTRTLLPSLPLPERWSSPVDTLGSKS) the chain is Cytoplasmic.

This sequence belongs to the G-protein coupled receptor 1 family. Atypical chemokine receptor subfamily.

It localises to the early endosome. The protein localises to the recycling endosome. The protein resides in the membrane. Functionally, atypical chemokine receptor that controls chemokine levels and localization via high-affinity chemokine binding that is uncoupled from classic ligand-driven signal transduction cascades, resulting instead in chemokine sequestration, degradation, or transcytosis. Also known as interceptor (internalizing receptor) or chemokine-scavenging receptor or chemokine decoy receptor. Has a promiscuous chemokine-binding profile, interacting with inflammatory chemokines of both the CXC and the CC subfamilies but not with homeostatic chemokines. Acts as a receptor for chemokines including CCL2, CCL5, CCL7, CCL11, CCL13, CCL14, CCL17, CXCL5, CXCL6, IL8/CXCL8, CXCL11, GRO, RANTES, MCP-1 and TARC. May regulate chemokine bioavailability and, consequently, leukocyte recruitment through two distinct mechanisms: when expressed in endothelial cells, it sustains the abluminal to luminal transcytosis of tissue-derived chemokines and their subsequent presentation to circulating leukocytes; when expressed in erythrocytes, serves as blood reservoir of cognate chemokines but also as a chemokine sink, buffering potential surges in plasma chemokine levels. The sequence is that of Atypical chemokine receptor 1 (ACKR1) from Saimiri boliviensis boliviensis (Bolivian squirrel monkey).